A 389-amino-acid polypeptide reads, in one-letter code: S-adenosylmethionine synthase (389 aa).

Residue histidine 17 coordinates ATP. Aspartate 19 is a binding site for Mg(2+). Glutamate 45 is a binding site for K(+). Positions 58 and 101 each coordinate L-methionine. The tract at residues 101 to 111 is flexible loop; that stretch reads QSPDIAQGVTE. Residues 168–170, 234–235, aspartate 243, 249–250, alanine 266, and lysine 270 each bind ATP; these read DSK, RF, and RK. Aspartate 243 provides a ligand contact to L-methionine. Lysine 274 serves as a coordination point for L-methionine.

It belongs to the AdoMet synthase family. In terms of assembly, homotetramer; dimer of dimers. Mg(2+) is required as a cofactor. It depends on K(+) as a cofactor.

The protein localises to the cytoplasm. The catalysed reaction is L-methionine + ATP + H2O = S-adenosyl-L-methionine + phosphate + diphosphate. The protein operates within amino-acid biosynthesis; S-adenosyl-L-methionine biosynthesis; S-adenosyl-L-methionine from L-methionine: step 1/1. Catalyzes the formation of S-adenosylmethionine (AdoMet) from methionine and ATP. The overall synthetic reaction is composed of two sequential steps, AdoMet formation and the subsequent tripolyphosphate hydrolysis which occurs prior to release of AdoMet from the enzyme. The sequence is that of S-adenosylmethionine synthase from Geobacter sp. (strain M21).